The sequence spans 383 residues: 4-hydroxy-3-methylbut-2-en-1-yl diphosphate synthase (flavodoxin) (383 aa).

[4Fe-4S] cluster-binding residues include Cys-277, Cys-280, Cys-312, and Glu-319.

It belongs to the IspG family. [4Fe-4S] cluster serves as cofactor.

The enzyme catalyses (2E)-4-hydroxy-3-methylbut-2-enyl diphosphate + oxidized [flavodoxin] + H2O + 2 H(+) = 2-C-methyl-D-erythritol 2,4-cyclic diphosphate + reduced [flavodoxin]. The protein operates within isoprenoid biosynthesis; isopentenyl diphosphate biosynthesis via DXP pathway; isopentenyl diphosphate from 1-deoxy-D-xylulose 5-phosphate: step 5/6. Converts 2C-methyl-D-erythritol 2,4-cyclodiphosphate (ME-2,4cPP) into 1-hydroxy-2-methyl-2-(E)-butenyl 4-diphosphate. The polypeptide is 4-hydroxy-3-methylbut-2-en-1-yl diphosphate synthase (flavodoxin) (Caulobacter vibrioides (strain ATCC 19089 / CIP 103742 / CB 15) (Caulobacter crescentus)).